Reading from the N-terminus, the 179-residue chain is MSRIGKRPIPIPNKVTIDIQGQHVAVKGPKGSLERTLPDKVNVVQENDTLLVQREDDSRTARERHGLTRTLVANMVEGVSKGFEKRLSIQGVGYRAQVQGTKLTLNVGYSKPVEMTMPAGIQVAVENNTLVIVSGIDKEIVGNVSAEIRAVRPPEVYKGKGIRYSDEFVRRKAGKTGKK.

This sequence belongs to the universal ribosomal protein uL6 family. As to quaternary structure, part of the 50S ribosomal subunit.

Its function is as follows. This protein binds to the 23S rRNA, and is important in its secondary structure. It is located near the subunit interface in the base of the L7/L12 stalk, and near the tRNA binding site of the peptidyltransferase center. This is Large ribosomal subunit protein uL6 from Rippkaea orientalis (strain PCC 8801 / RF-1) (Cyanothece sp. (strain PCC 8801)).